The following is a 650-amino-acid chain: DNA ligase (650 aa).

NAD(+) is bound by residues 30 to 34 (DEQYD) and 79 to 80 (SL). K110 serves as the catalytic N6-AMP-lysine intermediate. NAD(+)-binding residues include R131, E165, and K304. Zn(2+)-binding residues include C398, C401, C414, and C419. One can recognise a BRCT domain in the interval 573–650 (DNNNVFFNKT…EEEFLAQINK (78 aa)).

The protein belongs to the NAD-dependent DNA ligase family. LigA subfamily. Mg(2+) serves as cofactor. The cofactor is Mn(2+).

It catalyses the reaction NAD(+) + (deoxyribonucleotide)n-3'-hydroxyl + 5'-phospho-(deoxyribonucleotide)m = (deoxyribonucleotide)n+m + AMP + beta-nicotinamide D-nucleotide.. Functionally, DNA ligase that catalyzes the formation of phosphodiester linkages between 5'-phosphoryl and 3'-hydroxyl groups in double-stranded DNA using NAD as a coenzyme and as the energy source for the reaction. It is essential for DNA replication and repair of damaged DNA. In Helicobacter hepaticus (strain ATCC 51449 / 3B1), this protein is DNA ligase.